Here is a 164-residue protein sequence, read N- to C-terminus: Ubiquitin-fold modifier-conjugating enzyme 1 (164 aa).

Cys116 functions as the Glycyl thioester intermediate in the catalytic mechanism.

Belongs to the ubiquitin-conjugating enzyme family. UFC1 subfamily.

In terms of biological role, E2-like enzyme which forms an intermediate with UFM1 via a thioester linkage. The polypeptide is Ubiquitin-fold modifier-conjugating enzyme 1 (Drosophila erecta (Fruit fly)).